The primary structure comprises 2351 residues: Coagulation factor VIII (2351 aa).

The N-terminal stretch at 1–19 (MQIELSTCFFLCLLRFCFS) is a signal peptide. Plastocyanin-like domains lie at 20-198 (ATRR…LLVC) and 206-348 (EKTQ…VDSC). The F5/8 type A 1 domain maps to 20–348 (ATRRYYLGAV…MEAYVKVDSC (329 aa)). Residue Asn-60 is glycosylated (N-linked (GlcNAc...) asparagine). Cys-172 and Cys-198 form a disulfide bridge. The N-linked (GlcNAc...) asparagine glycan is linked to Asn-258. Cys-267 and Cys-348 form a disulfide bridge. Sulfotyrosine is present on Tyr-365. Plastocyanin-like domains lie at 399–573 (KTWV…LLIC) and 583–730 (NQIM…VSSC). In terms of domain architecture, F5/8 type A 2 spans 399 to 730 (KTWVHYIAAE…MTALLKVSSC (332 aa)). Residues Cys-547 and Cys-573 are joined by a disulfide bond. Asn-601 is a glycosylation site (N-linked (GlcNAc...) asparagine). Residues Cys-649 and Cys-730 are joined by a disulfide bond. Sulfotyrosine is present on residues Tyr-737, Tyr-738, and Tyr-742. The tract at residues 760–1667 (SFSQNSRHPS…NPPVLKRHQR (908 aa)) is b. Asn-776, Asn-803, Asn-847, and Asn-919 each carry an N-linked (GlcNAc...) asparagine glycan. 2 disordered regions span residues 906–928 (STIPSDNLAAGTDNTSSLGPPSM) and 941–961 (FGKKSSPLTESGGPLSLSEEN). Residues Asn-962, Asn-982, Asn-1020, Asn-1024, Asn-1074, Asn-1085, Asn-1204, Asn-1274, Asn-1278, Asn-1301, Asn-1319, Asn-1431, and Asn-1461 are each glycosylated (N-linked (GlcNAc...) asparagine). Sulfotyrosine is present on residues Tyr-1683 and Tyr-1699. Plastocyanin-like domains are found at residues 1713–1877 (KTRH…LLVC) and 1887–2040 (GRQV…SNKC). In terms of domain architecture, F5/8 type A 3 spans 1713–2040 (KTRHYFIAAV…TLFLVYSNKC (328 aa)). The N-linked (GlcNAc...) asparagine glycan is linked to Asn-1829. 4 cysteine pairs are disulfide-bonded: Cys-1851–Cys-1877, Cys-1918–Cys-1922, Cys-2040–Cys-2188, and Cys-2193–Cys-2345. F5/8 type C domains lie at 2040–2188 (CQTP…LMGC) and 2193–2345 (CSMP…VLGC). N-linked (GlcNAc...) asparagine glycosylation occurs at Asn-2137.

This sequence belongs to the multicopper oxidase family. As to quaternary structure, interacts with VWF/vWF. vWF binding is essential for the stabilization of F8 in circulation. Post-translationally, sulfation on Tyr-1699 is essential for binding vWF. In terms of processing, proteolytically cleaved by cathepsin CTSG to produce a partially activated form.

It is found in the secreted. The protein localises to the extracellular space. In terms of biological role, factor VIII, along with calcium and phospholipid, acts as a cofactor for F9/factor IXa when it converts F10/factor X to the activated form, factor Xa. The chain is Coagulation factor VIII (F8) from Homo sapiens (Human).